A 150-amino-acid polypeptide reads, in one-letter code: Alkaline nuclease (150 aa).

It belongs to the baculo-herpesviridae alkaline nuclease family.

In Suid herpesvirus 1 (strain NIA-3) (SuHV-1), this protein is Alkaline nuclease (UL12).